The chain runs to 394 residues: GDNF family receptor alpha-like (394 aa).

Positions 1–18 (MIVFIFLAMGLSLENEYT) are cleaved as a signal peptide. Over 19–351 (SQTNNCTYLR…TGFHSPFNGE (333 aa)) the chain is Extracellular. N-linked (GlcNAc...) asparagine glycans are attached at residues Asn23, Asn50, Asn62, Asn67, Asn103, and Asn116. 11 disulfides stabilise this stretch: Cys131–Cys189, Cys138–Cys144, Cys155–Cys167, Cys162–Cys210, Cys191–Cys198, Cys220–Cys291, Cys227–Cys233, Cys244–Cys275, Cys252–Cys258, Cys269–Cys316, and Cys293–Cys304. Positions 149–228 (ASYLKACSAN…TCLSVIRSCQ (80 aa)) are required for interaction with GDF15. The helical transmembrane segment at 352 to 371 (VIYAAMCMTVTCGILLLVMV) threads the bilayer. At 372 to 394 (KLRTSRISSKARDPSSIQIPGEL) the chain is on the cytoplasmic side.

Belongs to the GDNFR family. As to quaternary structure, interacts (via the extracellular domain) with GDF15 and RET; receptor of GDF15, mediates cellular signaling through interaction with RET after GDF15-binding. Interaction with RET requires previous GDF15-binding. In terms of processing, cleaved and inactivated by MMP14, inhibiting the GDF15-GFRAL aversive response. Expressed in the brainstem, restricted to cells in the area postrema and the immediately adjacent region of the nucleus tractus solitarius (at protein level). Detected at low levels in testis and adipose tissue.

The protein localises to the cell membrane. With respect to regulation, specifically inhibited by 3P10 monoclonal antibody. Strongly activated by LY3463251, a long-acting and stable agonist composed of GDF15 conjugated monomeric human IgG4 Fc. In terms of biological role, brainstem-restricted receptor for GDF15 hormone, which triggers an aversive response, characterized by nausea, vomiting, and/or loss of appetite in response to various stresses. The aversive response is both required to reduce continuing exposure to those stresses at the time of exposure and to promote avoidance behavior in the future. The GDF15-GFRAL aversive response is triggered by stresses, such as anticancer drugs (camptothecin or cisplatin), cancers or drugs such as metformin. Upon interaction with its ligand, GDF15, mediates the GDF15-induced autophosphorylation and activation of the RET tyrosine kinase receptor, leading to activation of MAPK- and AKT- signaling pathways. Ligand-binding activates GFRAL-expressing neurons localized in the area postrema and nucleus tractus solitarius of the brainstem. The GDF15-GFRAL signal induces expression of genes involved in metabolism, such as lipid metabolism in adipose tissues. This is GDNF family receptor alpha-like from Homo sapiens (Human).